Here is a 739-residue protein sequence, read N- to C-terminus: DNA ligase (739 aa).

Residue 34–38 participates in NAD(+) binding; it reads DADYD. Residues 49–59 show a composition bias toward basic and acidic residues; sequence ARFPHLKRPDS. Positions 49–70 are disordered; that stretch reads ARFPHLKRPDSPSEQVGARPGE. NAD(+) is bound by residues 83 to 84 and Glu117; that span reads SL. The N6-AMP-lysine intermediate role is filled by Lys119. NAD(+)-binding residues include Arg140, Glu175, Lys291, and Lys315. Cys420, Cys423, Cys438, and Cys444 together coordinate Zn(2+). In terms of domain architecture, BRCT spans 660–739; the sequence is ARDSPVAGKT…DGWLKLIEGL (80 aa).

The protein belongs to the NAD-dependent DNA ligase family. LigA subfamily. It depends on Mg(2+) as a cofactor. Requires Mn(2+) as cofactor.

The catalysed reaction is NAD(+) + (deoxyribonucleotide)n-3'-hydroxyl + 5'-phospho-(deoxyribonucleotide)m = (deoxyribonucleotide)n+m + AMP + beta-nicotinamide D-nucleotide.. Functionally, DNA ligase that catalyzes the formation of phosphodiester linkages between 5'-phosphoryl and 3'-hydroxyl groups in double-stranded DNA using NAD as a coenzyme and as the energy source for the reaction. It is essential for DNA replication and repair of damaged DNA. This is DNA ligase from Ruegeria pomeroyi (strain ATCC 700808 / DSM 15171 / DSS-3) (Silicibacter pomeroyi).